Reading from the N-terminus, the 178-residue chain is Adenine phosphoribosyltransferase (178 aa).

This sequence belongs to the purine/pyrimidine phosphoribosyltransferase family. In terms of assembly, homodimer.

Its subcellular location is the cytoplasm. It carries out the reaction AMP + diphosphate = 5-phospho-alpha-D-ribose 1-diphosphate + adenine. The protein operates within purine metabolism; AMP biosynthesis via salvage pathway; AMP from adenine: step 1/1. Functionally, catalyzes a salvage reaction resulting in the formation of AMP, that is energically less costly than de novo synthesis. In Novosphingobium aromaticivorans (strain ATCC 700278 / DSM 12444 / CCUG 56034 / CIP 105152 / NBRC 16084 / F199), this protein is Adenine phosphoribosyltransferase.